A 450-amino-acid polypeptide reads, in one-letter code: MSLLQFSGLFVVWLLCTLFIATLTWFEFRRVRFNFNVFFSLLFLLTFFFGFPLTSVLVFRFDVGVAPPEILLQVLLSAGCFYAVYYVTYKTRLRKRVADVPRRPLFTMNRVETNLTWVILMGIALVSVGIFFMHNGFLLFRLNSYSQIFSSEVSGVALKRFFYFFIPAMLVVYFLRQDSKAWLFFLVSTVAFGLLTYMIVGGTRANIIIAFAIFLFIGIIRGWISLWMLAAAGVLGIVGMFWLALKRYGMNVSGDEAFYTFLYLTRDTFSPWENLALLLQNYDNIDFQGLAPIVRDFYVFIPSWLWPGRPSMVLNSANYFTWEVLNNHSGLAISPTLIGSLVVMGGALFIPLGAIVVGLIIKWFDWLYELGNRETNRYKAAILHSFCFGAIFNMIVLAREGLDSFVSRVVFFIVVFGACLMIAKLLYWLFESAGLIHKRTKSSLRTQVEG.

The next 11 helical transmembrane spans lie at 6–26 (FSGL…LTWF), 37–57 (VFFS…TSVL), 63–83 (VGVA…CFYA), 118–138 (VILM…NGFL), 155–175 (GVAL…VYFL), 181–201 (AWLF…MIVG), 207–227 (IIIA…ISLW), 228–248 (MLAA…LKRY), 341–361 (LVVM…GLII), 378–398 (YKAA…IVLA), and 410–430 (VFFI…YWLF).

It belongs to the WzyE family. In terms of assembly, probably part of a complex composed of WzxE, WzyE and WzzE.

It is found in the cell inner membrane. The protein operates within bacterial outer membrane biogenesis; enterobacterial common antigen biosynthesis. In terms of biological role, probably involved in the polymerization of enterobacterial common antigen (ECA) trisaccharide repeat units. In Shigella flexneri, this protein is Probable ECA polymerase.